The sequence spans 467 residues: ATP synthase subunit beta 1 (467 aa).

An ATP-binding site is contributed by 150-157 (GGAGVGKT).

Belongs to the ATPase alpha/beta chains family. As to quaternary structure, F-type ATPases have 2 components, CF(1) - the catalytic core - and CF(0) - the membrane proton channel. CF(1) has five subunits: alpha(3), beta(3), gamma(1), delta(1), epsilon(1). CF(0) has three main subunits: a(1), b(2) and c(9-12). The alpha and beta chains form an alternating ring which encloses part of the gamma chain. CF(1) is attached to CF(0) by a central stalk formed by the gamma and epsilon chains, while a peripheral stalk is formed by the delta and b chains.

It is found in the cell inner membrane. It catalyses the reaction ATP + H2O + 4 H(+)(in) = ADP + phosphate + 5 H(+)(out). In terms of biological role, produces ATP from ADP in the presence of a proton gradient across the membrane. The catalytic sites are hosted primarily by the beta subunits. In Vibrio campbellii (strain ATCC BAA-1116), this protein is ATP synthase subunit beta 1.